Consider the following 359-residue polypeptide: 4-hydroxy-3-methylbut-2-en-1-yl diphosphate synthase (flavodoxin) (359 aa).

Residues C264, C267, C299, and E306 each coordinate [4Fe-4S] cluster.

Belongs to the IspG family. [4Fe-4S] cluster is required as a cofactor.

It carries out the reaction (2E)-4-hydroxy-3-methylbut-2-enyl diphosphate + oxidized [flavodoxin] + H2O + 2 H(+) = 2-C-methyl-D-erythritol 2,4-cyclic diphosphate + reduced [flavodoxin]. The protein operates within isoprenoid biosynthesis; isopentenyl diphosphate biosynthesis via DXP pathway; isopentenyl diphosphate from 1-deoxy-D-xylulose 5-phosphate: step 5/6. In terms of biological role, converts 2C-methyl-D-erythritol 2,4-cyclodiphosphate (ME-2,4cPP) into 1-hydroxy-2-methyl-2-(E)-butenyl 4-diphosphate. The sequence is that of 4-hydroxy-3-methylbut-2-en-1-yl diphosphate synthase (flavodoxin) from Mycoplasmoides gallisepticum (strain R(low / passage 15 / clone 2)) (Mycoplasma gallisepticum).